We begin with the raw amino-acid sequence, 194 residues long: MSQTDVLDLYKQAGAFHEGRFLLASGRQSPYFMQSTTLLQHPRALMELGGLMSQKILDAGLKPDFIVGPAMGGVTLAYEVARQLSETLPDVRAIFAEKDGSGGMKLREAFAVRPGETFVAVEDVLTTGGSLLRAVRAVEGQGGQCIGLCCIIDRRQQTGPLSGYPLMSLKELYFDTYASHEVPGWLAERPLQEI.

5-phospho-alpha-D-ribose 1-diphosphate contacts are provided by residues Lys98 and 122–130 (EDVLTTGGS). The orotate site is built by Thr126 and Arg154.

The protein belongs to the purine/pyrimidine phosphoribosyltransferase family. PyrE subfamily. Homodimer. It depends on Mg(2+) as a cofactor.

It carries out the reaction orotidine 5'-phosphate + diphosphate = orotate + 5-phospho-alpha-D-ribose 1-diphosphate. The protein operates within pyrimidine metabolism; UMP biosynthesis via de novo pathway; UMP from orotate: step 1/2. Its function is as follows. Catalyzes the transfer of a ribosyl phosphate group from 5-phosphoribose 1-diphosphate to orotate, leading to the formation of orotidine monophosphate (OMP). This chain is Orotate phosphoribosyltransferase, found in Deinococcus radiodurans (strain ATCC 13939 / DSM 20539 / JCM 16871 / CCUG 27074 / LMG 4051 / NBRC 15346 / NCIMB 9279 / VKM B-1422 / R1).